The following is a 272-amino-acid chain: ATP synthase subunit delta (272 aa).

It belongs to the ATPase delta chain family. F-type ATPases have 2 components, F(1) - the catalytic core - and F(0) - the membrane proton channel. F(1) has five subunits: alpha(3), beta(3), gamma(1), delta(1), epsilon(1). F(0) has three main subunits: a(1), b(2) and c(10-14). The alpha and beta chains form an alternating ring which encloses part of the gamma chain. F(1) is attached to F(0) by a central stalk formed by the gamma and epsilon chains, while a peripheral stalk is formed by the delta and b chains.

It is found in the cell membrane. Functionally, f(1)F(0) ATP synthase produces ATP from ADP in the presence of a proton or sodium gradient. F-type ATPases consist of two structural domains, F(1) containing the extramembraneous catalytic core and F(0) containing the membrane proton channel, linked together by a central stalk and a peripheral stalk. During catalysis, ATP synthesis in the catalytic domain of F(1) is coupled via a rotary mechanism of the central stalk subunits to proton translocation. This protein is part of the stalk that links CF(0) to CF(1). It either transmits conformational changes from CF(0) to CF(1) or is implicated in proton conduction. The protein is ATP synthase subunit delta of Corynebacterium jeikeium (strain K411).